A 123-amino-acid polypeptide reads, in one-letter code: Anti-lipopolysaccharide factor (123 aa).

The N-terminal stretch at 1–26 is a signal peptide; that stretch reads MRTRVMAGLCVALVVMCLYMPQPCEA. An intrachain disulfide couples C55 to C76.

As to expression, strong expression in hemocytes, heart and muscle, with weaker expression detected in gills and hepatopancreas. No expression detected in eyes.

It is found in the secreted. Its function is as follows. Binds to bacterial LPS and may specifically inhibit the LPS-mediated activation of the hemolymph coagulation. It has a strong antibacterial effect especially on the growth of Gram-negative bacteria. The polypeptide is Anti-lipopolysaccharide factor (Scylla serrata (Mud crab)).